The primary structure comprises 532 residues: Muscarinic acetylcholine receptor M5 (532 aa).

Topologically, residues 1-29 (MEGDSYGNATTINGTPVNHQPLERHRLWE) are extracellular. N-linked (GlcNAc...) asparagine glycosylation occurs at N8. A helical membrane pass occupies residues 30–53 (VITIAAVTAVVSLITIVGNVLVMI). Residues 54 to 66 (SFKVNSQLKTVNN) are Cytoplasmic-facing. A helical membrane pass occupies residues 67-87 (YYLLSLACADLIIGIFSMNLY). The Extracellular portion of the chain corresponds to 88–104 (TTYILMGRWALGSLACD). The helical transmembrane segment at 105-126 (LWLALDYVASNASVMNLLVISF) threads the bilayer. At 127–146 (DRYFSITRPLTYRAKRTPKR) the chain is on the cytoplasmic side. The helical transmembrane segment at 147–169 (AGIMIGLAWLISFILWAPAILCW) threads the bilayer. At 170–191 (QYLVGKRTVPPDECQIQFLSEP) the chain is on the extracellular side. Residues 192–214 (TITFGTAIAAFYIPVSVMTILYC) traverse the membrane as a helical segment. At 215–443 (RIYRETEKRT…LVKERKAAQT (229 aa)) the chain is on the cytoplasmic side. Residues 263-294 (QRERNQASRSSSHRSTSITGKPSQATGPSTNW) form a disordered region. A compositionally biased stretch (low complexity) spans 270–279 (SRSSSHRSTS). Residues 280-294 (ITGKPSQATGPSTNW) show a composition bias toward polar residues. Residues 444-464 (LSAILLAFIITWTPYNIMVLV) traverse the membrane as a helical segment. Residues 465–478 (STFCDKCVPVALWH) are Extracellular-facing. A helical transmembrane segment spans residues 479 to 498 (LGYWLCYVNSTVNPICYALC). The Cytoplasmic portion of the chain corresponds to 499–532 (NRTFRKTFKMLLLCQWKKKKVEEKLYWQGNSKLP). 2 positions are modified to phosphothreonine: T501 and T505.

The protein belongs to the G-protein coupled receptor 1 family. Muscarinic acetylcholine receptor subfamily. CHRM5 sub-subfamily.

Its subcellular location is the cell membrane. The protein localises to the postsynaptic cell membrane. Functionally, the muscarinic acetylcholine receptor mediates various cellular responses, including inhibition of adenylate cyclase, breakdown of phosphoinositides and modulation of potassium channels through the action of G proteins. Primary transducing effect is Pi turnover. The sequence is that of Muscarinic acetylcholine receptor M5 (CHRM5) from Saimiri boliviensis boliviensis (Bolivian squirrel monkey).